The following is a 485-amino-acid chain: Sphingosine kinase 1 (485 aa).

The 143-residue stretch at 116–258 (GRPKKLLVFV…LDVATISQGT (143 aa)) folds into the DAGKc domain. ATP contacts are provided by residues 126–128 (NPF) and Thr-158. A substrate-binding site is contributed by 183–186 (SGDG). The active-site Proton donor/acceptor is the Asp-185. ATP contacts are provided by residues Glu-190 and 215–217 (GSG). Asp-276 contributes to the substrate binding site. ATP contacts are provided by residues Arg-283, Arg-289, and 446-448 (DGE).

It depends on Mg(2+) as a cofactor. Highly expressed in stems and flowers and at lower levels in roots, leaves and siliques.

The protein localises to the vacuole membrane. The catalysed reaction is a sphingoid base + ATP = a sphingoid 1-phosphate + ADP + H(+). With respect to regulation, activated by phosphatidic acid (PA). Binding with PA stimulates the activity by promoting the binding of substrate to the catalytic site. In terms of biological role, involved in the production of sphingolipid metabolites. Phosphorylates sphingosine and various sphingoid long-chain base (LCB) products, such as phytosphingosine (PHS, 4-hydroxysphinganine), 4-hydroxy-8-sphingenine, 4,8-sphingadienine, D-erythro-dihydrosphingosine and D,L-threo-dihydrosphingosine. Is required for abscisic acid (ABA) signaling that mediates stomatal closure, inhibition of seed germination and root elongation. May function upstream of PLDALPHA1 and phosphatidic acid (PA) in an amplification response to ABA that mediates stomatal closure. This is Sphingosine kinase 1 (SPHK1) from Arabidopsis thaliana (Mouse-ear cress).